Consider the following 1031-residue polypeptide: Kinesin heavy chain (1031 aa).

Residues 8-325 (NIKVVCRVRP…LMFGQRAKTI (318 aa)) enclose the Kinesin motor domain. An ATP-binding site is contributed by 84–91 (GQTSSGKT). Residues 393 to 857 (PKQMTVHVSE…RDNADLRCEL (465 aa)) adopt a coiled-coil conformation. The segment covering 673 to 686 (TDQEDKKREEEDKM) has biased composition (basic and acidic residues). 2 disordered regions span residues 673–692 (TDQE…ATEM) and 906–1031 (RNFA…EQGS). The interval 858 to 1031 (PKLERRLRAT…PLTTSGEQGS (174 aa)) is globular. The segment covering 932–949 (GSTGIRGGGYSGIRGGGS) has biased composition (gly residues). Composition is skewed to polar residues over residues 964–977 (SHNN…NPND) and 1014–1031 (RNNT…EQGS).

It belongs to the TRAFAC class myosin-kinesin ATPase superfamily. Kinesin family. Kinesin subfamily. As to quaternary structure, oligomer composed of two heavy chains and two light chains.

It is found in the cytoplasm. It localises to the cytoskeleton. Functionally, kinesin is a microtubule-associated force-producing protein that may play a role in organelle transport. This is Kinesin heavy chain from Strongylocentrotus purpuratus (Purple sea urchin).